Consider the following 274-residue polypeptide: Hydroxyethylthiazole kinase (274 aa).

Methionine 51 contacts substrate. Residues arginine 127 and serine 173 each contribute to the ATP site. Residue glycine 200 participates in substrate binding.

Belongs to the Thz kinase family. Requires Mg(2+) as cofactor.

It carries out the reaction 5-(2-hydroxyethyl)-4-methylthiazole + ATP = 4-methyl-5-(2-phosphooxyethyl)-thiazole + ADP + H(+). Its pathway is cofactor biosynthesis; thiamine diphosphate biosynthesis; 4-methyl-5-(2-phosphoethyl)-thiazole from 5-(2-hydroxyethyl)-4-methylthiazole: step 1/1. In terms of biological role, catalyzes the phosphorylation of the hydroxyl group of 4-methyl-5-beta-hydroxyethylthiazole (THZ). The chain is Hydroxyethylthiazole kinase from Photobacterium profundum (strain SS9).